Here is a 270-residue protein sequence, read N- to C-terminus: Catechol 1,2-dioxygenase (270 aa).

Positions 152, 186, 210, and 212 each coordinate Fe cation.

This sequence belongs to the intradiol ring-cleavage dioxygenase family. Fe(3+) serves as cofactor.

It carries out the reaction catechol + O2 = cis,cis-muconate + 2 H(+). This is Catechol 1,2-dioxygenase (catA) from Rhodococcus opacus (Nocardia opaca).